The following is a 450-amino-acid chain: tRNA-2-methylthio-N(6)-dimethylallyladenosine synthase (450 aa).

Residues 7 to 127 (KKVFIKTYGC…LPDVLARVRG (121 aa)) enclose the MTTase N-terminal domain. [4Fe-4S] cluster is bound by residues Cys16, Cys52, Cys90, Cys168, Cys172, and Cys175. In terms of domain architecture, Radical SAM core spans 154 to 388 (IKRGVTAFLT…LLLKQQQGFG (235 aa)). The region spanning 389-450 (SSLVGSTIDT…GYNSLFAELA (62 aa)) is the TRAM domain.

This sequence belongs to the methylthiotransferase family. MiaB subfamily. Monomer. It depends on [4Fe-4S] cluster as a cofactor.

It localises to the cytoplasm. The enzyme catalyses N(6)-dimethylallyladenosine(37) in tRNA + (sulfur carrier)-SH + AH2 + 2 S-adenosyl-L-methionine = 2-methylsulfanyl-N(6)-dimethylallyladenosine(37) in tRNA + (sulfur carrier)-H + 5'-deoxyadenosine + L-methionine + A + S-adenosyl-L-homocysteine + 2 H(+). In terms of biological role, catalyzes the methylthiolation of N6-(dimethylallyl)adenosine (i(6)A), leading to the formation of 2-methylthio-N6-(dimethylallyl)adenosine (ms(2)i(6)A) at position 37 in tRNAs that read codons beginning with uridine. This chain is tRNA-2-methylthio-N(6)-dimethylallyladenosine synthase, found in Mesorhizobium japonicum (strain LMG 29417 / CECT 9101 / MAFF 303099) (Mesorhizobium loti (strain MAFF 303099)).